The chain runs to 632 residues: SH2B adapter protein 2 (632 aa).

Tyr-52 carries the post-translational modification Phosphotyrosine. Ser-141 carries the post-translational modification Phosphoserine. One can recognise a PH domain in the interval 193–306 (DIQREGALRF…WVADIQGCVD (114 aa)). Ser-310 bears the Phosphoserine mark. Positions 381–409 (TLESPGGSGSDSNNTGEQGAETDPEAEPE) are disordered. A compositionally biased stretch (acidic residues) spans 400–409 (AETDPEAEPE). Residues 417–515 (WFHGTLSRVK…SADITLRSYV (99 aa)) form the SH2 domain. 2 disordered regions span residues 516–537 (RAQD…SPAC) and 558–632 (ASPS…YSFY). The segment covering 519-532 (DPPPEPGPTPPAAP) has biased composition (pro residues). Composition is skewed to low complexity over residues 558-579 (ASPS…AASG) and 604-626 (EAVA…RAVE). Tyr-629 bears the Phosphotyrosine mark.

It belongs to the SH2B adapter family. Homodimer. Interacts with KIT/c-KIT, SHC1, EPOR, PDGFR, VAV1 and VAV3. Interacts (via N-terminal region) with SHC1. Interacts (via the phosphorylated C-terminus) with GRB2. Interacts (via its SH2 domain) with EPOR, INSR and KIT. Interacts with GRB2 after B-cell antigen receptor stimulation. Interacts (via PH domain) with VAV3. Interacts with NTRK1, NTRK2 and NTRK3 (phosphorylated); after stimulation of the receptor by its extracellular ligand and subsequent autophosphorylation of the receptor. Binds INSR, GRB2, ASB6 and CAP. Insulin stimulation leads to dissociation of CAP. Binds CBS only when SH2B2/APS has become phosphorylated. INSR binding does not depend on the phosphorylation of SH2B2/APS. Tyrosine phosphorylated by JAK2, KIT and other kinases activated by B-cell receptor in response to stimulation with cytokines, IL3, IL5, PDGF, IGF1, IGF2, CSF2/GM-CSF and cross-linking of the B-cell receptor complex. Expressed in spleen, prostate, testis, uterus, small intestine and skeletal muscle. Among hematopoietic cell lines, expressed exclusively in B-cells. Not expressed in most tumor cell lines.

The protein localises to the cytoplasm. It localises to the cell membrane. Its function is as follows. Adapter protein for several members of the tyrosine kinase receptor family. Involved in multiple signaling pathways. May be involved in coupling from immunoreceptor to Ras signaling. Acts as a negative regulator of cytokine signaling in collaboration with CBL. Binds to EPOR and suppresses EPO-induced STAT5 activation, possibly through a masking effect on STAT5 docking sites in EPOR. Suppresses PDGF-induced mitogenesis. May induce cytoskeletal reorganization via interaction with VAV3. This Homo sapiens (Human) protein is SH2B adapter protein 2 (SH2B2).